A 167-amino-acid chain; its full sequence is Caltractin (167 aa).

A compositionally biased stretch (basic residues) spans 1-18; the sequence is MSSARTVRKDKPRGRHHG. The segment at 1 to 23 is disordered; the sequence is MSSARTVRKDKPRGRHHGLTQQK. EF-hand domains lie at 22–57, 58–93, 95–130, and 131–166; these read QKRQ…LGFE, MTEE…KIGE, DTKE…LGEN, and FTVK…TSYA. Ca(2+)-binding residues include Asp-35, Asp-37, Ser-39, Thr-41, Glu-46, Asp-71, Asp-73, Ser-75, Glu-82, Asp-108, Asp-110, Asn-112, Lys-114, Asp-119, Asp-144, Asp-146, Asp-148, Glu-150, and Glu-155.

Belongs to the centrin family.

The protein resides in the cytoplasm. Its subcellular location is the cytoskeleton. It is found in the microtubule organizing center. In terms of biological role, plays a fundamental role in microtubule-organizing center structure and function. The protein is Caltractin of Atriplex nummularia (Old man saltbush).